The sequence spans 207 residues: Guanylate kinase (207 aa).

The 180-residue stretch at 6–185 (GLLIVLSGPS…AKQRIQSIVE (180 aa)) folds into the Guanylate kinase-like domain. 13–20 (GPSGVGKG) contacts ATP.

This sequence belongs to the guanylate kinase family.

It is found in the cytoplasm. It catalyses the reaction GMP + ATP = GDP + ADP. Its function is as follows. Essential for recycling GMP and indirectly, cGMP. In Staphylococcus saprophyticus subsp. saprophyticus (strain ATCC 15305 / DSM 20229 / NCIMB 8711 / NCTC 7292 / S-41), this protein is Guanylate kinase.